The following is a 624-amino-acid chain: Methyl-accepting chemotaxis protein McpG (624 aa).

The chain crosses the membrane as a helical span at residues 11–31 (ILLAASLIVILAFSLFTLYND). The 219-residue stretch at 36–254 (NAIREDLENY…GLPSANWYIG (219 aa)) folds into the Cache domain. The helical transmembrane segment at 272–292 (SAVIATVVAVVIIIGLLGLLI) threads the bilayer. The region spanning 293-347 (RVLMQPLHTMTRAMEDIAEGEGDLTKRLHIHSHDEFGVLGNAFNRFVERIHSSIR) is the HAMP domain. The region spanning 352-588 (ATEQVNEVAL…AINMDINEIN (237 aa)) is the Methyl-accepting transducer domain.

The protein belongs to the methyl-accepting chemotaxis (MCP) protein family.

The protein resides in the cell membrane. Functionally, chemotactic-signal transducers respond to changes in the concentration of attractants and repellents in the environment, transduce a signal from the outside to the inside of the cell, and facilitate sensory adaptation through the variation of the level of methylation. McpG is a specific gamma-aminobutyric acid (GABA) chemoreceptor that recognizes GABA over a wide range of environmental conditions. Contributes to attraction to and colonization of plant roots. The sequence is that of Methyl-accepting chemotaxis protein McpG from Pseudomonas putida (strain ATCC 47054 / DSM 6125 / CFBP 8728 / NCIMB 11950 / KT2440).